A 98-amino-acid polypeptide reads, in one-letter code: NADH-ubiquinone oxidoreductase chain 4L (98 aa).

A run of 3 helical transmembrane segments spans residues 1-21 (MSLTYMNMFMAFTISLLGLLL), 29-49 (SLLCLEGMMLSLFVMMTMVIL), and 61-81 (IILLVFAACEAALGLSLLVMV).

It belongs to the complex I subunit 4L family. In terms of assembly, core subunit of respiratory chain NADH dehydrogenase (Complex I) which is composed of 45 different subunits.

The protein resides in the mitochondrion inner membrane. It catalyses the reaction a ubiquinone + NADH + 5 H(+)(in) = a ubiquinol + NAD(+) + 4 H(+)(out). Its function is as follows. Core subunit of the mitochondrial membrane respiratory chain NADH dehydrogenase (Complex I) which catalyzes electron transfer from NADH through the respiratory chain, using ubiquinone as an electron acceptor. Part of the enzyme membrane arm which is embedded in the lipid bilayer and involved in proton translocation. The chain is NADH-ubiquinone oxidoreductase chain 4L (MT-ND4L) from Platyrrhinus helleri (Heller's broad-nosed bat).